Here is a 193-residue protein sequence, read N- to C-terminus: MGDFFFILLSTALVNNVVLVKFLGLCPFMGVSRKTDAAIGMGLATTFVLTLAAGASWMVEALILEPLDLTFLRILSLILVIAAIVQFIEVVMRKLAPGLHRALGIYLPLITTNCAVLGVALLNIQEGHGLASSLLYGFGSASGFTLVLVIFAGMRERLAQLSVPGPFAGAPIAFISAGLLSMAFMGFAGLAPN.

6 helical membrane-spanning segments follow: residues 4-24, 39-59, 71-91, 102-122, 134-154, and 167-187; these read FFFILLSTALVNNVVLVKFLG, IGMGLATTFVLTLAAGASWMV, FLRILSLILVIAAIVQFIEVV, ALGIYLPLITTNCAVLGVALL, LLYGFGSASGFTLVLVIFAGM, and FAGAPIAFISAGLLSMAFMGF.

Belongs to the NqrDE/RnfAE family. In terms of assembly, the complex is composed of six subunits: RnfA, RnfB, RnfC, RnfD, RnfE and RnfG.

The protein resides in the cellular chromatophore membrane. In terms of biological role, part of a membrane-bound complex that couples electron transfer with translocation of ions across the membrane. This Cereibacter sphaeroides (strain ATCC 17029 / ATH 2.4.9) (Rhodobacter sphaeroides) protein is Ion-translocating oxidoreductase complex subunit A.